Here is a 371-residue protein sequence, read N- to C-terminus: N-acetyllactosaminide alpha-2,3-sialyltransferase (371 aa).

Gly-255 contributes to the CMP-N-acetyl-beta-neuraminate binding site. Residue Asp-258 is the Proton acceptor of the active site. Residues 278 to 282, 299 to 300, and 322 to 323 each bind CMP-N-acetyl-beta-neuraminate; these read APHPR, IE, and SG. His-280 acts as the Proton donor in catalysis.

The protein belongs to the glycosyltransferase 52 family. In terms of assembly, homodimer.

The protein localises to the cell outer membrane. It catalyses the reaction a beta-D-galactosyl-(1-&gt;4)-N-acetyl-beta-D-glucosaminyl derivative + CMP-N-acetyl-beta-neuraminate = an N-acetyl-alpha-neuraminyl-(2-&gt;3)-beta-D-galactosyl-(1-&gt;4)-N-acetyl-beta-D-glucosaminyl derivative + CMP + H(+). It functions in the pathway bacterial outer membrane biogenesis; lipooligosaccharide biosynthesis. Catalyzes the transfer of sialic acid from the substrate CMP-N-acetylneuraminate to the terminal galactose residue of the lacto-N-neotetraose branch of surface lipooligosaccharide (LOS), forming an alpha-2,3-sialyl linkage. Thus, functions in the sialylation of LOS, which plays a role in the evasion of the host immune response by protecting N.meningitidis from complement-mediated serum killing and from phagocytic killing by neutrophils. This is N-acetyllactosaminide alpha-2,3-sialyltransferase from Neisseria meningitidis serogroup A / serotype 4A (strain DSM 15465 / Z2491).